Reading from the N-terminus, the 508-residue chain is UBX domain-containing protein 4 (508 aa).

The segment at 1–200 is interaction with UBQLN1; that stretch reads MLWFQGAIPA…PTEDLTVRVE (200 aa). At 1-413 the chain is on the cytoplasmic side; the sequence is MLWFQGAIPA…VHSSSGDFWT (413 aa). Residues 117 to 199 form a disordered region; it reads GEASLANGSQ…RPTEDLTVRV (83 aa). Polar residues predominate over residues 122–190; the sequence is ANGSQSEGSV…QEPSGCSNQR (69 aa). The UBX domain occupies 315–393; the sequence is ERSTVARIQF…ELAPSASVVL (79 aa). Residues 414 to 434 lie within the membrane without spanning it; it reads LLGTVLYPFLAIWRLISNFLF. Over 435-508 the chain is Cytoplasmic; sequence SNPPPAQTSV…TWNGNSTQQM (74 aa). Positions 450 to 459 are enriched in polar residues; that stretch reads ETSNLASSSN. The segment at 450 to 508 is disordered; sequence ETSNLASSSNSEKREPVRKRVLEKRGEDFKKEGKIYRLRTQDDGEDENNTWNGNSTQQM. The segment covering 460–491 has biased composition (basic and acidic residues); that stretch reads SEKREPVRKRVLEKRGEDFKKEGKIYRLRTQD. Thr-489 carries the phosphothreonine modification. The span at 498–508 shows a compositional bias: polar residues; sequence NTWNGNSTQQM.

Directly interacts with VCP. Interacts with UBQLN1. Forms a complex with VCP and UBQLN1.

The protein localises to the endoplasmic reticulum membrane. It localises to the nucleus envelope. Functionally, involved in endoplasmic reticulum-associated protein degradation (ERAD). Acts as a platform to recruit both UBQLN1 and VCP to the ER during ERAD. This Bos taurus (Bovine) protein is UBX domain-containing protein 4 (UBXN4).